An 845-amino-acid polypeptide reads, in one-letter code: Protein P (845 aa).

A terminal protein domain (TP) region spans residues 1 to 179 (MPLSYQHFRK…FCGSPYSWEQ (179 aa)). Positions 180–348 (ELHHGRLVIK…YCLSHLVNLL (169 aa)) are spacer. The polymerase/reverse transcriptase domain (RT) stretch occupies residues 349-692 (EDWGPCTEHG…YMNLYPVARQ (344 aa)). Residues 359–602 (EHHIRIPRTP…YSLNFMGYVI (244 aa)) form the Reverse transcriptase domain. Mg(2+) is bound by residues Asp-431, Asp-553, and Asp-554.

It belongs to the hepadnaviridae P protein family.

It carries out the reaction DNA(n) + a 2'-deoxyribonucleoside 5'-triphosphate = DNA(n+1) + diphosphate. It catalyses the reaction Endonucleolytic cleavage to 5'-phosphomonoester.. With respect to regulation, activated by host HSP70 and HSP40 in vitro to be able to bind the epsilon loop of the pgRNA. Because deletion of the RNase H region renders the protein partly chaperone-independent, the chaperones may be needed indirectly to relieve occlusion of the RNA-binding site by this domain. Inhibited by several reverse-transcriptase inhibitors: Lamivudine, Adefovir and Entecavir. Functionally, multifunctional enzyme that converts the viral RNA genome into dsDNA in viral cytoplasmic capsids. This enzyme displays a DNA polymerase activity that can copy either DNA or RNA templates, and a ribonuclease H (RNase H) activity that cleaves the RNA strand of RNA-DNA heteroduplexes in a partially processive 3'- to 5'-endonucleasic mode. Neo-synthesized pregenomic RNA (pgRNA) are encapsidated together with the P protein, and reverse-transcribed inside the nucleocapsid. Initiation of reverse-transcription occurs first by binding the epsilon loop on the pgRNA genome, and is initiated by protein priming, thereby the 5'-end of (-)DNA is covalently linked to P protein. Partial (+)DNA is synthesized from the (-)DNA template and generates the relaxed circular DNA (RC-DNA) genome. After budding and infection, the RC-DNA migrates in the nucleus, and is converted into a plasmid-like covalently closed circular DNA (cccDNA). The activity of P protein does not seem to be necessary for cccDNA generation, and is presumably released from (+)DNA by host nuclear DNA repair machinery. The polypeptide is Protein P (Homo sapiens (Human)).